A 221-amino-acid polypeptide reads, in one-letter code: 7-cyano-7-deazaguanine synthase (221 aa).

7-17 (LSGGLDSAVSL) is an ATP binding site. Zn(2+) is bound by residues Cys-192, Cys-200, Cys-203, and Cys-206.

Belongs to the QueC family. As to quaternary structure, homodimer. The cofactor is Zn(2+).

It carries out the reaction 7-carboxy-7-deazaguanine + NH4(+) + ATP = 7-cyano-7-deazaguanine + ADP + phosphate + H2O + H(+). It participates in purine metabolism; 7-cyano-7-deazaguanine biosynthesis. Catalyzes the ATP-dependent conversion of 7-carboxy-7-deazaguanine (CDG) to 7-cyano-7-deazaguanine (preQ(0)). The chain is 7-cyano-7-deazaguanine synthase from Pelotomaculum thermopropionicum (strain DSM 13744 / JCM 10971 / SI).